Consider the following 421-residue polypeptide: 4-aminobutyrate aminotransferase PuuE (421 aa).

Pyridoxal 5'-phosphate is bound by residues 110–111 (GA) and 238–241 (DEVQ). Residue Lys-267 is modified to N6-(pyridoxal phosphate)lysine. Thr-296 contacts pyridoxal 5'-phosphate.

This sequence belongs to the class-III pyridoxal-phosphate-dependent aminotransferase family. Requires pyridoxal 5'-phosphate as cofactor.

The catalysed reaction is 4-aminobutanoate + 2-oxoglutarate = succinate semialdehyde + L-glutamate. It functions in the pathway amine and polyamine degradation; putrescine degradation; succinate semialdehyde from 4-aminobutanoate. Completely inhibited by succinate and low-aeration conditions. In terms of biological role, catalyzes the transfer of the amino group from gamma-aminobutyrate (GABA) to alpha-ketoglutarate (KG) to yield succinic semialdehyde (SSA). PuuE is important for utilization of putrescine as the sole nitrogen or carbon source. This Escherichia coli (strain K12) protein is 4-aminobutyrate aminotransferase PuuE (puuE).